A 244-amino-acid polypeptide reads, in one-letter code: MTTKNTSGRGQRELRVRVKTAKGRKLSSTLWLERQLNDPYVIRAKKEGYRGRAAYKILELDDKFGFLKPGGRVVDLGCAPGGWCQVAVERVNALGQRKNKPEGTVLGVDLQEVEPISGAEIHQLDFLSDDADEKVKGWLGGRADVVMSDMAAAASGHKGTDHLRIIALCEAAAAFAFDVLEEGGTFVAKVLAGGAENELQALLKKNFTKVANVKPPASRADSSEKFVVAMGFRGRASEPEEGEA.

S-adenosyl-L-methionine contacts are provided by G81, W83, D109, D125, and D149. The Proton acceptor role is filled by K189.

This sequence belongs to the class I-like SAM-binding methyltransferase superfamily. RNA methyltransferase RlmE family.

It localises to the cytoplasm. The enzyme catalyses uridine(2552) in 23S rRNA + S-adenosyl-L-methionine = 2'-O-methyluridine(2552) in 23S rRNA + S-adenosyl-L-homocysteine + H(+). Its function is as follows. Specifically methylates the uridine in position 2552 of 23S rRNA at the 2'-O position of the ribose in the fully assembled 50S ribosomal subunit. This Cereibacter sphaeroides (strain ATCC 17029 / ATH 2.4.9) (Rhodobacter sphaeroides) protein is Ribosomal RNA large subunit methyltransferase E.